We begin with the raw amino-acid sequence, 215 residues long: Ribonuclease T (215 aa).

One can recognise an Exonuclease domain in the interval 20–194 (VVIDVETAGF…YDTERTAVLF (175 aa)). The Mg(2+) site is built by aspartate 23, glutamate 25, histidine 181, and aspartate 186. The Proton donor/acceptor role is filled by histidine 181.

The protein belongs to the RNase T family. In terms of assembly, homodimer. Mg(2+) is required as a cofactor.

Functionally, trims short 3' overhangs of a variety of RNA species, leaving a one or two nucleotide 3' overhang. Responsible for the end-turnover of tRNA: specifically removes the terminal AMP residue from uncharged tRNA (tRNA-C-C-A). Also appears to be involved in tRNA biosynthesis. This Salmonella choleraesuis (strain SC-B67) protein is Ribonuclease T.